A 170-amino-acid polypeptide reads, in one-letter code: 3-dehydroquinate dehydratase (170 aa).

Tyr22 acts as the Proton acceptor in catalysis. Substrate contacts are provided by Asn76, His82, and Asp89. Residue His102 is the Proton donor of the active site. Substrate-binding positions include 103 to 104 and Arg113; that span reads LT.

The protein belongs to the type-II 3-dehydroquinase family. Homododecamer.

The catalysed reaction is 3-dehydroquinate = 3-dehydroshikimate + H2O. It participates in metabolic intermediate biosynthesis; chorismate biosynthesis; chorismate from D-erythrose 4-phosphate and phosphoenolpyruvate: step 3/7. Its function is as follows. Catalyzes a trans-dehydration via an enolate intermediate. The protein is 3-dehydroquinate dehydratase (aroQ) of Helicobacter pylori (strain J99 / ATCC 700824) (Campylobacter pylori J99).